A 289-amino-acid polypeptide reads, in one-letter code: Protoheme IX farnesyltransferase 2 (289 aa).

9 helical membrane passes run 13 to 33 (LEITILIDIVAIAAFLAVPGS), 37 to 57 (IYDLLILIFAGTLASMSASIF), 86 to 106 (LFFIIATAMVLLSFVTSFILL), 109 to 129 (VTSAFILGGFASYVLLYTIIL), 137 to 157 (IVIGGIAGSFPALAGWASITG), 159 to 179 (VSATSLFIAFLVFMWTPTHFW), 207 to 227 (EFWIMVNTSILVIYSILPLFI), 232 to 252 (VGLLYMPMAAVMDALLIYYVA), and 267 to 287 (AFHFSNMYMLMLLIGIMLILV).

The protein belongs to the UbiA prenyltransferase family. Protoheme IX farnesyltransferase subfamily.

The protein localises to the cell membrane. It catalyses the reaction heme b + (2E,6E)-farnesyl diphosphate + H2O = Fe(II)-heme o + diphosphate. It functions in the pathway porphyrin-containing compound metabolism; heme O biosynthesis; heme O from protoheme: step 1/1. Functionally, converts heme B (protoheme IX) to heme O by substitution of the vinyl group on carbon 2 of heme B porphyrin ring with a hydroxyethyl farnesyl side group. In Picrophilus torridus (strain ATCC 700027 / DSM 9790 / JCM 10055 / NBRC 100828 / KAW 2/3), this protein is Protoheme IX farnesyltransferase 2.